The sequence spans 1098 residues: Probable arabinosyltransferase B (1098 aa).

A run of 12 helical transmembrane segments spans residues 28–50 (WVATIAGLIGFVLSVATPLLPVV), 217–239 (LKLLAIIGAIVATVVALIALWRL), 271–293 (ASWRTFTLTDAVVIFGFLLWHVI), 402–419 (LRPEGIIALGSLVTYVLI), 434–456 (AVVTAAFTLGVQPTGLIAVAALV), 472–494 (LVGTLPLVSPMLAAGTVILTVVF), 541–558 (FGFLITALCLFTAVFIML), 570–587 (PAWRLMGVIFGTMFFLMF), 597–619 (GLFAAVGAAMAALTTVLVSPSVL), 626–648 (MAFLAALFFLLALCWATTNGWWY), 663–685 (IDGITVSTIFFALFAIAAGYAAW), and 698–720 (LIRALTTAPVPIVAGFMAAVFVA).

Belongs to the emb family.

It localises to the cell membrane. Functionally, arabinosyl transferase responsible for the polymerization of arabinose into the arabinan of arabinogalactan. In Mycobacterium tuberculosis (strain CDC 1551 / Oshkosh), this protein is Probable arabinosyltransferase B (embB).